The following is an 84-amino-acid chain: Subtilisin-chymotrypsin inhibitor WSCI (84 aa).

A signal peptide spans Met1–Asn12. The segment at Met1 to Leu28 is disordered. A compositionally biased stretch (basic and acidic residues) spans Thr15–Trp25.

As to quaternary structure, monomer.

It is found in the secreted. Its function is as follows. Inhibits B.lichenoformis subtilisin, B.subtilis subtilisin, bovine pancreatic alpha-chymotrypsin and porcine alpha-chymotrypsin with Ki of 3.92 nM, 5.70 nM, 7.24 nM and 9.35 nM respectively. B.lichenoformis subtilisin is inhibited with a molar ratio of 1:0.87. Also inhibits chymotrypsin-like activities from the digestive tracts of the insect larvae T.molitor, P.interpunctella and H.armigera. Does not inhibit bovine pancreatic trypsin, porcine pancreatic elastase, or human leukocyte elastase. The protein is Subtilisin-chymotrypsin inhibitor WSCI of Triticum aestivum (Wheat).